The primary structure comprises 483 residues: GTPase Obg (483 aa).

Residues Ser-2–Val-159 form the Obg domain. One can recognise an OBG-type G domain in the interval Ala-160–Arg-340. Residues Gly-166–Ser-173, Phe-191–Val-195, Asp-212–Gly-215, Asn-292–Asp-295, and Ser-321–Val-323 each bind GTP. The Mg(2+) site is built by Ser-173 and Thr-193. In terms of domain architecture, OCT spans Pro-358–Pro-438.

The protein belongs to the TRAFAC class OBG-HflX-like GTPase superfamily. OBG GTPase family. As to quaternary structure, monomer. It depends on Mg(2+) as a cofactor.

The protein resides in the cytoplasm. Functionally, an essential GTPase which binds GTP, GDP and possibly (p)ppGpp with moderate affinity, with high nucleotide exchange rates and a fairly low GTP hydrolysis rate. Plays a role in control of the cell cycle, stress response, ribosome biogenesis and in those bacteria that undergo differentiation, in morphogenesis control. The sequence is that of GTPase Obg from Rhodococcus erythropolis (strain PR4 / NBRC 100887).